The primary structure comprises 1064 residues: Leucine--tRNA ligase (1064 aa).

A disordered region spans residues 1 to 25 (MARAMSETAEPGARTGAADTTVAPT). The short motif at 106 to 117 (PYPSGSGLHVGH) is the 'HIGH' region element. A disordered region spans residues 435 to 456 (GRPGGGTEPADTAGPEAGADPA). The 'KMSKS' region motif lies at 831 to 835 (KMGKS). Lys-834 contributes to the ATP binding site.

This sequence belongs to the class-I aminoacyl-tRNA synthetase family.

The protein resides in the cytoplasm. The catalysed reaction is tRNA(Leu) + L-leucine + ATP = L-leucyl-tRNA(Leu) + AMP + diphosphate. The polypeptide is Leucine--tRNA ligase (Frankia casuarinae (strain DSM 45818 / CECT 9043 / HFP020203 / CcI3)).